Reading from the N-terminus, the 192-residue chain is uncharacterized protein (192 aa).

Residues 29 to 160 (HRQAAVLIPI…PLDIYRRGDS (132 aa)) form the Nudix hydrolase domain. Positions 67–89 (GAVDDTDASAIAAALREAEEEVA) match the Nudix box motif. 2 residues coordinate Mg(2+): glutamate 83 and glutamate 87.

It belongs to the Nudix hydrolase family. PCD1 subfamily. Mn(2+) is required as a cofactor. The cofactor is Mg(2+).

In terms of biological role, probably mediates the hydrolysis of some nucleoside diphosphate derivatives. This is an uncharacterized protein from Escherichia coli (strain K12).